Consider the following 456-residue polypeptide: tRNA(Ile)-lysidine synthase (456 aa).

28–33 (SGGSDS) is an ATP binding site.

Belongs to the tRNA(Ile)-lysidine synthase family.

It localises to the cytoplasm. It catalyses the reaction cytidine(34) in tRNA(Ile2) + L-lysine + ATP = lysidine(34) in tRNA(Ile2) + AMP + diphosphate + H(+). Functionally, ligates lysine onto the cytidine present at position 34 of the AUA codon-specific tRNA(Ile) that contains the anticodon CAU, in an ATP-dependent manner. Cytidine is converted to lysidine, thus changing the amino acid specificity of the tRNA from methionine to isoleucine. This is tRNA(Ile)-lysidine synthase from Brucella anthropi (strain ATCC 49188 / DSM 6882 / CCUG 24695 / JCM 21032 / LMG 3331 / NBRC 15819 / NCTC 12168 / Alc 37) (Ochrobactrum anthropi).